The primary structure comprises 96 residues: MKKVIMALGVLAFANALMATDVKALAKSCAACHGVKFEKKALGKSKIVNMMSEAEIEKDLMDFKSGANKNPIMSAQAKKLSDEDIKALAKYIPTLK.

An N-terminal signal peptide occupies residues 1 to 19 (MKKVIMALGVLAFANALMA). Residues Cys29, Cys32, His33, and Met73 each contribute to the heme c site.

Belongs to the cytochrome c family. In terms of processing, binds 1 heme c group covalently per subunit.

Its subcellular location is the periplasm. Natural electron acceptor for a formate dehydrogenase. This is Cytochrome c-553 from Helicobacter pylori (strain ATCC 700392 / 26695) (Campylobacter pylori).